Here is a 728-residue protein sequence, read N- to C-terminus: Probable 3',5'-cyclic phosphodiesterase pde-5 (728 aa).

The GAF domain occupies 214-371 (SMDAVIIKVM…HHAKLYDKIR (158 aa)). The region spanning 390 to 709 (CNADEVNKLK…KKWEELAEEQ (320 aa)) is the PDEase domain. The active-site Proton donor is histidine 465. Histidine 469, histidine 503, aspartate 504, and aspartate 614 together coordinate a divalent metal cation. Positions 691–728 (MRERCEYNAKKWEELAEEQRKKQEALAQQNGEANETQE) form a coiled coil. Residues 708–728 (EQRKKQEALAQQNGEANETQE) are disordered. A compositionally biased stretch (polar residues) spans 716–728 (LAQQNGEANETQE).

The protein belongs to the cyclic nucleotide phosphodiesterase family. It depends on a divalent metal cation as a cofactor.

The catalysed reaction is a nucleoside 3',5'-cyclic phosphate + H2O = a nucleoside 5'-phosphate + H(+). In terms of biological role, redundantly with pde-1, plays a role in the AFD thermosensory neurons to regulate microvilli receptive ending morphology, possibly by regulating cGMP levels. The protein is Probable 3',5'-cyclic phosphodiesterase pde-5 (pde-5) of Caenorhabditis elegans.